Consider the following 479-residue polypeptide: Aspartyl/glutamyl-tRNA(Asn/Gln) amidotransferase subunit B (479 aa).

This sequence belongs to the GatB/GatE family. GatB subfamily. Heterotrimer of A, B and C subunits.

It carries out the reaction L-glutamyl-tRNA(Gln) + L-glutamine + ATP + H2O = L-glutaminyl-tRNA(Gln) + L-glutamate + ADP + phosphate + H(+). It catalyses the reaction L-aspartyl-tRNA(Asn) + L-glutamine + ATP + H2O = L-asparaginyl-tRNA(Asn) + L-glutamate + ADP + phosphate + 2 H(+). Functionally, allows the formation of correctly charged Asn-tRNA(Asn) or Gln-tRNA(Gln) through the transamidation of misacylated Asp-tRNA(Asn) or Glu-tRNA(Gln) in organisms which lack either or both of asparaginyl-tRNA or glutaminyl-tRNA synthetases. The reaction takes place in the presence of glutamine and ATP through an activated phospho-Asp-tRNA(Asn) or phospho-Glu-tRNA(Gln). This Halorhodospira halophila (strain DSM 244 / SL1) (Ectothiorhodospira halophila (strain DSM 244 / SL1)) protein is Aspartyl/glutamyl-tRNA(Asn/Gln) amidotransferase subunit B.